Consider the following 267-residue polypeptide: Integral membrane protein 2C (267 aa).

The residue at position 37 (threonine 37) is a Phosphothreonine. The helical; Signal-anchor for type II membrane protein transmembrane segment at 55–75 threads the bilayer; sequence VGGVCYLSMGMVVLLMGLVFA. The region spanning 136–230 is the BRICHOS domain; the sequence is FGGGDPADII…LCNGKDTYRL (95 aa). A disulfide bridge connects residues cysteine 163 and cysteine 222. A glycan (N-linked (GlcNAc...) asparagine) is linked at asparagine 169.

Belongs to the ITM2 family. Interacts with BACE1. Interacts with APP. Interacts with STMN2. Type I membrane-bound, as well as soluble, furin has a pre-eminent role in ITM2C proteolytic processing. PCSK7 and PCSK5 may also be involved although to a lesser extent. The soluble form of PCSK7 is incapable of processing ITM2C. Fails to undergo shedding by ADAM10 and intramembrane cleavage by SPPL2B.

The protein localises to the lysosome membrane. Its subcellular location is the cell membrane. In terms of biological role, negative regulator of amyloid-beta peptide production. May inhibit the processing of APP by blocking its access to alpha- and beta-secretase. Binding to the beta-secretase-cleaved APP C-terminal fragment is negligible, suggesting that ITM2C is a poor gamma-secretase cleavage inhibitor. May play a role in TNF-induced cell death and neuronal differentiation. This Macaca fascicularis (Crab-eating macaque) protein is Integral membrane protein 2C (ITM2C).